The chain runs to 184 residues: Inosine triphosphate pyrophosphatase (184 aa).

10–15 (TGNVKK) provides a ligand contact to ITP. Residue Glu37 coordinates Mg(2+). ITP contacts are provided by residues Lys49, 65-66 (DT), Lys82, 141-144 (FGWD), Lys164, and 169-170 (HR).

This sequence belongs to the HAM1 NTPase family. Homodimer. It depends on Mg(2+) as a cofactor. Mn(2+) is required as a cofactor.

It is found in the cytoplasm. It carries out the reaction ITP + H2O = IMP + diphosphate + H(+). It catalyses the reaction dITP + H2O = dIMP + diphosphate + H(+). The enzyme catalyses XTP + H2O = XMP + diphosphate + H(+). Pyrophosphatase that hydrolyzes non-canonical purine nucleotides such as inosine triphosphate (ITP), deoxyinosine triphosphate (dITP) or xanthosine 5'-triphosphate (XTP) to their respective monophosphate derivatives. The enzyme does not distinguish between the deoxy- and ribose forms. Probably excludes non-canonical purines from RNA and DNA precursor pools, thus preventing their incorporation into RNA and DNA and avoiding chromosomal lesions. This chain is Inosine triphosphate pyrophosphatase, found in Caenorhabditis elegans.